A 409-amino-acid chain; its full sequence is Serine/threonine transporter SstT (409 aa).

9 helical membrane-spanning segments follow: residues 24–44 (LALG…AGLF), 48–68 (FVGA…AATI), 82–102 (IIVL…IAGM), 142–162 (AIAN…GAAL), 194–214 (LGIF…ALAG), 218–238 (LLAV…PAIV), 292–312 (IPLG…VLAM), 319–339 (GIQV…VSAC), and 365–385 (VAMQ…SAET).

Belongs to the dicarboxylate/amino acid:cation symporter (DAACS) (TC 2.A.23) family.

It localises to the cell inner membrane. It catalyses the reaction L-serine(in) + Na(+)(in) = L-serine(out) + Na(+)(out). The catalysed reaction is L-threonine(in) + Na(+)(in) = L-threonine(out) + Na(+)(out). Its function is as follows. Involved in the import of serine and threonine into the cell, with the concomitant import of sodium (symport system). This is Serine/threonine transporter SstT from Neisseria meningitidis serogroup C / serotype 2a (strain ATCC 700532 / DSM 15464 / FAM18).